The following is a 307-amino-acid chain: Leucine-rich repeat-containing protein 59 (307 aa).

Residues 1 to 247 (MARANGRSQN…LAQRQSRLRK (247 aa)) are Cytoplasmic-facing. LRR repeat units lie at residues 10–31 (NLRD…SEVP), 40–61 (KATA…FCNL), 63–84 (HIVR…FGRL), 86–107 (NLQH…FAQL), and 109–131 (SLKW…AGDC). A coiled-coil region spans residues 156–222 (EIELQRKLQL…LNSNKKAEEE (67 aa)). A disordered region spans residues 170 to 238 (KKKLEAKQRV…RMATPKEKKL (69 aa)). Composition is skewed to basic and acidic residues over residues 174–187 (EAKQ…EREM) and 194–238 (QQKE…EKKL). A helical membrane pass occupies residues 248–268 (IACILLFGLLVVLLVVVACRF). Topologically, residues 269-307 (TDLKAINMCTSVNAIYKETLSALHSNPVLERFLQDPSSQ) are lumenal.

In terms of assembly, interacts with SGO1.

The protein resides in the microsome membrane. The protein localises to the endoplasmic reticulum membrane. Its subcellular location is the nucleus envelope. Required for nuclear import of FGF1. This chain is Leucine-rich repeat-containing protein 59 (lrrc59), found in Xenopus laevis (African clawed frog).